Consider the following 314-residue polypeptide: MKKKIAEYEVGEQVDIFLLIKTATKGIASNGKPFLTVILQDPSGDIEAKLWDVSPEVEKQYVAETIVKVAGDILNYKGRIQLRVKQIRVANENEVTDISDFVEKAPVKKEDMVEKITQYIFEMRNPNIQRLTRHLLNKHQNEFLDYPAATKNHHEFVSGLAYHVVSMLDLAKAISNLYPSLDKDLLYAGVILHDLGKVIELSGPISTTYTLEGNLLGHISIMVNEIGKAADELQIDAEEVLILQHIVLSHHGKAEWGSPKPPLVKEAEILHYIDNLDAKMNMMDRALGRTKPGEYTERVFALDNRSFYKPTFHN.

The 117-residue stretch at 163 to 279 folds into the HD domain; it reads HVVSMLDLAK…LHYIDNLDAK (117 aa).

Belongs to the YhaM family.

Functionally, shows a 3'-5' exoribonuclease activity. The polypeptide is 3'-5' exoribonuclease YhaM (Bacillus cereus (strain AH820)).